The primary structure comprises 336 residues: Coproporphyrin III ferrochelatase (336 aa).

Fe-coproporphyrin III contacts are provided by serine 52 and tyrosine 116. Residues histidine 172 and glutamate 255 each contribute to the Fe(2+) site.

Belongs to the ferrochelatase family.

It is found in the cytoplasm. It carries out the reaction Fe-coproporphyrin III + 2 H(+) = coproporphyrin III + Fe(2+). It participates in porphyrin-containing compound metabolism; protoheme biosynthesis. Functionally, involved in coproporphyrin-dependent heme b biosynthesis. Catalyzes the insertion of ferrous iron into coproporphyrin III to form Fe-coproporphyrin III. The protein is Coproporphyrin III ferrochelatase of Mycobacterium avium (strain 104).